A 376-amino-acid polypeptide reads, in one-letter code: UDP-4-amino-4,6-dideoxy-N-acetyl-beta-L-altrosamine transaminase (376 aa).

Substrate contacts are provided by residues Tyr4, 24 to 27 (EILT), Ala54, and Ser176. Lys181 carries the N6-(pyridoxal phosphate)lysine modification. Residues Asn226 and 311–314 (QVHY) each bind substrate.

It belongs to the DegT/DnrJ/EryC1 family.

It carries out the reaction UDP-4-amino-4,6-dideoxy-N-acetyl-beta-L-altrosamine + 2-oxoglutarate = UDP-2-acetamido-2,6-dideoxy-beta-L-arabino-hex-4-ulose + L-glutamate. Its function is as follows. Catalyzes the second step in the biosynthesis of pseudaminic acid, a sialic-acid-like sugar that is used to modify flagellin. Uses UDP-2-acetamido-2,6-dideoxy-beta-L-arabino-4-hexulose as substrate producing UDP-4-amino-4,6-dideoxy-beta-L-AltNAc. In Campylobacter jejuni subsp. jejuni serotype O:23/36 (strain 81-176), this protein is UDP-4-amino-4,6-dideoxy-N-acetyl-beta-L-altrosamine transaminase (pseC).